Reading from the N-terminus, the 429-residue chain is Keratin, type I cytoskeletal 47 kDa (429 aa).

Positions methionine 1 to serine 16 are enriched in low complexity. The disordered stretch occupies residues methionine 1 to glycine 20. Residues methionine 1–asparagine 69 form a head region. The segment at glutamate 70–tryptophan 105 is coil 1A. Positions glutamate 70–valine 385 constitute an IF rod domain. The interval tyrosine 106 to isoleucine 127 is linker 1. The coil 1B stretch occupies residues isoleucine 128 to alanine 219. Residues lysine 220–isoleucine 242 are linker 12. The interval leucine 243–glutamate 381 is coil 2. Residues leucine 382 to glutamate 429 are tail. Residues alanine 389–threonine 408 are disordered. Residues threonine 391–threonine 408 show a composition bias toward low complexity.

Belongs to the intermediate filament family. Heterotetramer of two type I and two type II keratins.

The polypeptide is Keratin, type I cytoskeletal 47 kDa (xk81a1) (Xenopus laevis (African clawed frog)).